Consider the following 188-residue polypeptide: Large ribosomal subunit protein eL18 (188 aa).

Residues 147-188 (EANKHFGPAPGVPHSHTKAHVRSKGRQFERARGRRTSKGYKK) are disordered. 2 stretches are compositionally biased toward basic residues: residues 161–171 (SHTKAHVRSKG) and 178–188 (RGRRTSKGYKK).

This sequence belongs to the eukaryotic ribosomal protein eL18 family.

It localises to the cytoplasm. This is Large ribosomal subunit protein eL18 (RpL18) from Diaphorina citri (Asian citrus psyllid).